The chain runs to 231 residues: Uracil-DNA glycosylase (231 aa).

Catalysis depends on Asp71, which acts as the Proton acceptor.

Belongs to the uracil-DNA glycosylase (UDG) superfamily. UNG family.

Its subcellular location is the cytoplasm. It carries out the reaction Hydrolyzes single-stranded DNA or mismatched double-stranded DNA and polynucleotides, releasing free uracil.. In terms of biological role, excises uracil residues from the DNA which can arise as a result of misincorporation of dUMP residues by DNA polymerase or due to deamination of cytosine. In Pseudomonas aeruginosa (strain UCBPP-PA14), this protein is Uracil-DNA glycosylase.